The following is a 93-amino-acid chain: Small ribosomal subunit protein uS19 (93 aa).

This sequence belongs to the universal ribosomal protein uS19 family.

Its function is as follows. Protein S19 forms a complex with S13 that binds strongly to the 16S ribosomal RNA. The protein is Small ribosomal subunit protein uS19 of Desulfitobacterium hafniense (strain DSM 10664 / DCB-2).